Consider the following 466-residue polypeptide: Argininosuccinate lyase (466 aa).

This sequence belongs to the lyase 1 family. Argininosuccinate lyase subfamily.

The protein localises to the cytoplasm. The catalysed reaction is 2-(N(omega)-L-arginino)succinate = fumarate + L-arginine. It participates in amino-acid biosynthesis; L-arginine biosynthesis; L-arginine from L-ornithine and carbamoyl phosphate: step 3/3. The sequence is that of Argininosuccinate lyase from Campylobacter concisus (strain 13826).